The primary structure comprises 489 residues: F-box/LRR-repeat protein 7 (489 aa).

Over residues 1-31 (MGANNGKQSGSEGKGSSSISSDLSSSTDQTS) the composition is skewed to low complexity. Residues 1 to 76 (MGANNGKQSG…AVLNGSSTSS (76 aa)) are disordered. The segment covering 32-55 (TKAPKNAATSEDSDLSMRTVSTPS) has biased composition (polar residues). Over residues 64–76 (SSSAVLNGSSTSS) the composition is skewed to low complexity. One can recognise an F-box domain in the interval 109 to 155 (GAPVDILPDHAFLQIFTHLPTNQLCRCARVCRRWYNLAWDPRLWRTI). 11 LRR repeats span residues 168–193 (LRVL…MVSG), 194–219 (CRRL…EVAG), 220–245 (CYNV…DVSG), 251–279 (CISL…DMTD), 280–305 (CFAL…YLRR), 306–331 (CVRL…SVSD), 332–357 (CRFI…SIAH), 358–383 (CSRI…NARG), 384–409 (CEGL…DIGK), 410–435 (CPLV…SLKS), and 436–461 (CESI…NVQD).

This sequence belongs to the FBXL7 family. As to quaternary structure, part of the SCF (SKP1-CUL1-F-box) E3 ubiquitin-protein ligase complex SCF(FBXL7).

It is found in the cytoplasm. The protein localises to the cytoskeleton. Its subcellular location is the microtubule organizing center. It localises to the centrosome. The protein operates within protein modification; protein ubiquitination. In terms of biological role, substrate recognition component of a SCF (SKP1-CUL1-F-box protein) E3 ubiquitin-protein ligase complex which mediates the ubiquitination and subsequent proteasomal degradation of target proteins. In Danio rerio (Zebrafish), this protein is F-box/LRR-repeat protein 7 (fbxl7).